Here is a 196-residue protein sequence, read N- to C-terminus: Crossover junction endodeoxyribonuclease RuvC (196 aa).

Residues aspartate 19, glutamate 80, and aspartate 153 contribute to the active site. 3 residues coordinate Mg(2+): aspartate 19, glutamate 80, and aspartate 153.

Belongs to the RuvC family. As to quaternary structure, homodimer which binds Holliday junction (HJ) DNA. The HJ becomes 2-fold symmetrical on binding to RuvC with unstacked arms; it has a different conformation from HJ DNA in complex with RuvA. In the full resolvosome a probable DNA-RuvA(4)-RuvB(12)-RuvC(2) complex forms which resolves the HJ. Mg(2+) is required as a cofactor.

It localises to the cytoplasm. The enzyme catalyses Endonucleolytic cleavage at a junction such as a reciprocal single-stranded crossover between two homologous DNA duplexes (Holliday junction).. In terms of biological role, the RuvA-RuvB-RuvC complex processes Holliday junction (HJ) DNA during genetic recombination and DNA repair. Endonuclease that resolves HJ intermediates. Cleaves cruciform DNA by making single-stranded nicks across the HJ at symmetrical positions within the homologous arms, yielding a 5'-phosphate and a 3'-hydroxyl group; requires a central core of homology in the junction. The consensus cleavage sequence is 5'-(A/T)TT(C/G)-3'. Cleavage occurs on the 3'-side of the TT dinucleotide at the point of strand exchange. HJ branch migration catalyzed by RuvA-RuvB allows RuvC to scan DNA until it finds its consensus sequence, where it cleaves and resolves the cruciform DNA. This is Crossover junction endodeoxyribonuclease RuvC from Cutibacterium acnes (strain DSM 16379 / KPA171202) (Propionibacterium acnes).